Reading from the N-terminus, the 344-residue chain is GTP 3',8-cyclase (344 aa).

In terms of domain architecture, Radical SAM core spans 19-245 (PFGRAVTYLR…DIPYRTGGPA (227 aa)). Arg-28 is a GTP binding site. [4Fe-4S] cluster is bound by residues Cys-35 and Cys-39. Tyr-41 is an S-adenosyl-L-methionine binding site. [4Fe-4S] cluster is bound at residue Cys-42. Residue Arg-77 coordinates GTP. Gly-81 contributes to the S-adenosyl-L-methionine binding site. Residue Thr-111 participates in GTP binding. Ser-135 is a binding site for S-adenosyl-L-methionine. Residue Lys-171 participates in GTP binding. Position 205 (Met-205) interacts with S-adenosyl-L-methionine. Residues Cys-268 and Cys-271 each coordinate [4Fe-4S] cluster. 273–275 (RVR) is a binding site for GTP. A [4Fe-4S] cluster-binding site is contributed by Cys-285.

It belongs to the radical SAM superfamily. MoaA family. Monomer and homodimer. The cofactor is [4Fe-4S] cluster.

It carries out the reaction GTP + AH2 + S-adenosyl-L-methionine = (8S)-3',8-cyclo-7,8-dihydroguanosine 5'-triphosphate + 5'-deoxyadenosine + L-methionine + A + H(+). The protein operates within cofactor biosynthesis; molybdopterin biosynthesis. Functionally, catalyzes the cyclization of GTP to (8S)-3',8-cyclo-7,8-dihydroguanosine 5'-triphosphate. The polypeptide is GTP 3',8-cyclase (Brucella melitensis biotype 2 (strain ATCC 23457)).